The chain runs to 324 residues: Spheroidene monooxygenase (324 aa).

The interval 226–324 is disordered; sequence GKDPVGEALT…PGKGGRKENA (99 aa). 2 stretches are compositionally biased toward low complexity: residues 248–278 and 287–313; these read PAAA…VEMP and VVEA…NFKG.

Belongs to the CrtA family. Heme is required as a cofactor.

The enzyme catalyses spheroidene + 4 reduced [2Fe-2S]-[ferredoxin] + 2 O2 + 4 H(+) = spheroiden-2-one + 4 oxidized [2Fe-2S]-[ferredoxin] + 3 H2O. The catalysed reaction is spheroidene + 2 reduced [2Fe-2S]-[ferredoxin] + O2 + 2 H(+) = 2-hydroxyspheroidene + 2 oxidized [2Fe-2S]-[ferredoxin] + H2O. It catalyses the reaction 2-hydroxyspheroidene + 2 reduced [2Fe-2S]-[ferredoxin] + O2 + 2 H(+) = 2,2-dihydroxyspheroidene + 2 oxidized [2Fe-2S]-[ferredoxin] + H2O. It carries out the reaction 2,2-dihydroxyspheroidene = spheroiden-2-one + H2O. The protein operates within carotenoid biosynthesis; spheroidene biosynthesis. In terms of biological role, involved in the biosynthesis of the carotenoid spheroidene. Catalyzes the introduction of one keto group at the C-2 position of spheroidene. In vitro, can use nonnative substrates and produce oxocarotenoids with a hydroxy and/or a keto group, derived from neurosporene, lycopene, 3,4-didehydrolycopene or 3,4,3',4'-tetradehydrolycopene. This Cereibacter sphaeroides (strain ATCC 17023 / DSM 158 / JCM 6121 / CCUG 31486 / LMG 2827 / NBRC 12203 / NCIMB 8253 / ATH 2.4.1.) (Rhodobacter sphaeroides) protein is Spheroidene monooxygenase.